Reading from the N-terminus, the 201-residue chain is MSLSTLKNRRERGLLDGQFLIAMPGMEDRNFNRTVIYICAHSDAGAMGFVINRAQNLTFTDVLLHLDMIKDDDAIVLPPVARDFPIQTGGPVESGRGFVLHSDDYLSDGSIPVSDDISLTATLDIVRAISRGSGPKRATMLLGYAGWGAGQLEAEIGSNGWLNCPANEELIFDRSLDDKYERALALMGINAAMLSPHAGHA.

It belongs to the UPF0301 (AlgH) family.

The protein is UPF0301 protein Arad_1256 of Rhizobium rhizogenes (strain K84 / ATCC BAA-868) (Agrobacterium radiobacter).